Reading from the N-terminus, the 993-residue chain is MGMRPTARMPKLTRRSRILILIALGVIALLLAGPRLIDAYVDWLWFGELGYRSVFSTVLVTRFVVFLIAGLLVGGIVFAGLAVAYRTRPVFVPSNDNDPVARYRALVLSRLRLVSVGVPVAIGLLAGIIAQSYWVRIQLFLHGGDFGIKDPQFGKDLGFYAFELPFYRLLLSYLFVAVFLAFVANLLAHYIFGGIRLSGRTGALSRSARIQLVTLVGLLVLLKAVAYWLDRYELLSHTRGGKPITGAGYTDINAVLPAKLILMAIALICAAAVFSAITMRDLRIPAIGLVLLLLSSLIVGAGWPLIVEQISVKPNAAQKESEYISRSITATRQAYGLTSDVVTYRNYTGDAQATAQQVADDRATTSNIRLLDPTIVSPAFTQFQQGKNFYYFPDQLSIDRYLDRNGALRDYVVAVRELNPDRLIDNQRDWINRHTVYTHGNGFIASPANTVRGIANDPNQNGGYPEFLVNVVGANGNVVSDGPAPLDQPRVYFGPVISNTSADYAIVGRNGADREYDYETSTETKNYTYTGLGGVPIGDWLSRSVFAAKFAERNFLFSNVIGSNSKILFNRDPARRVEAVAPWLTTDSSVYPAIVNKRLVWIIDGYTTLDNYPYSELTSLESATADSNEVAFNKLAPDKRVSYIRNSVKATVDAYDGTVTLYQQDEQDPVLKAWMQVFPGTVKPKSDISPELAEHLRYPEDLFKVQRMLLAKYHVNDPVTFFSTSDFWDVPLDPNPTASSYQPPYYIVAKNIAKNDNSSSYQLTSAMNRFKRDYLAAYISASSDPATYGRITVLTIPGQVNGPKLANNAITTDPAVSQDLGVIGRDNQNRIRWGNLLTLPVGQGGLLYVEPVYASPGASDAASSYPRLIRVAMMYNDKIGYGPTVRDALTGLFGPGAGAAATNIQPTEGGAPAASPPANAPAPAVTPGSAPPVAAPPVPDGSVTLSPAKAAVLQEIQAAIGAAKDAQKKGDFAGYGAALQRLDDAITKYNNTK.

A run of 7 helical transmembrane segments spans residues 18 to 38 (ILIL…RLID), 63 to 83 (FVVF…GLAV), 113 to 133 (LVSV…AQSY), 175 to 195 (FVAV…FGGI), 210 to 230 (IQLV…YWLD), 254 to 274 (AVLP…AAVF), and 287 to 307 (IGLV…PLIV). A disordered region spans residues 903-941 (NIQPTEGGAPAASPPANAPAPAVTPGSAPPVAAPPVPDG). Positions 929–939 (SAPPVAAPPVP) are enriched in pro residues.

Belongs to the UPF0182 family.

It localises to the cell membrane. The sequence is that of UPF0182 protein MAP_3291c from Mycolicibacterium paratuberculosis (strain ATCC BAA-968 / K-10) (Mycobacterium paratuberculosis).